A 215-amino-acid chain; its full sequence is Probable phosphoglycerate mutase GpmB (215 aa).

Substrate is bound by residues 8–15 (RHGETQWN), 21–22 (QG), R58, R60, 82–85 (ELDM), 104–105 (RR), and 151–152 (GI). Catalysis depends on H9, which acts as the Tele-phosphohistidine intermediate. Catalysis depends on E82, which acts as the Proton donor/acceptor.

The protein belongs to the phosphoglycerate mutase family. GpmB subfamily.

It carries out the reaction (2R)-2-phosphoglycerate = (2R)-3-phosphoglycerate. The protein operates within carbohydrate degradation; glycolysis; pyruvate from D-glyceraldehyde 3-phosphate: step 3/5. This Klebsiella pneumoniae (strain 342) protein is Probable phosphoglycerate mutase GpmB.